The primary structure comprises 517 residues: Cytochrome P450 monooxygenase calE (517 aa).

A glycan (N-linked (GlcNAc...) asparagine) is linked at Asn-8. Residues 14-34 (SLMHHYILIAILVASIIAMVV) traverse the membrane as a helical segment. Cys-458 lines the heme pocket.

This sequence belongs to the cytochrome P450 family. It depends on heme as a cofactor.

It is found in the membrane. Its pathway is secondary metabolite biosynthesis. Functionally, cytochrome P450 monooxygenase; part of the gene cluster that mediates the biosynthesis of calbistrin A and related compounds. Calbistrin A is a secondary metabolite with an interesting structure that was recently found to have bioactivity against leukemia cells. It consists of two polyketides linked by an ester bond: a bicyclic decalin containing polyketide and a linear 12 carbon dioic acid structure. The polyketide synthase calA is probably responsible for forming the decalin moiety. Because calA lacks a designated enoylreductase (ER) domain, the required activity is provided by the trans-enoyl reductase calK. Following release from the PKS, calF then probably catalyzes the oxidation and the subsequent Diels Alder cycloisomerization that lead to the formation of the decalin moiety. The decalin polyketide backbone includes two C-methyl groups, at C7 and C11 in backbone, of which the C7 position is probably methylated by the methyltransferase domain of calA. A candidate for adding the methyl group at C11, if not done by CalA, is the cluster methyltransferase calH. Several additional tailoring enzymes within the cluster could be involved in the modification of the decalin polyketide product. Those include the 3 cytochrome P450 monooxygenases CalE, CalG and CalL, of which one might be responsible for the introduction of the extra hydroxyl group attached to the backbone of the decalin moiety, at position C9 in the backbone, that allows for attachment of the linear moiety. One tailoring enzyme activity that is expected to be involved in biosynthesis of calbistrin is an acyltransferase for connecting the two polyketide synthase products, and which could be performed by the cluster acyltransferase calJ. The enzyme responsible for the biosynthesis of the linear moiety, probably a second PKS, has not been identified yet. The chain is Cytochrome P450 monooxygenase calE from Penicillium decumbens.